Reading from the N-terminus, the 158-residue chain is 2-C-methyl-D-erythritol 2,4-cyclodiphosphate synthase (158 aa).

2 residues coordinate a divalent metal cation: Asp9 and His11. Residues Asp9–His11 and His35–Ser36 contribute to the 4-CDP-2-C-methyl-D-erythritol 2-phosphate site. His43 is a binding site for a divalent metal cation. Residues Asp57 to Gly59, Phe62 to Asp66, Ala101 to Ala107, Thr133 to Glu136, Phe140, and Arg143 contribute to the 4-CDP-2-C-methyl-D-erythritol 2-phosphate site.

It belongs to the IspF family. In terms of assembly, homotrimer. A divalent metal cation serves as cofactor.

The enzyme catalyses 4-CDP-2-C-methyl-D-erythritol 2-phosphate = 2-C-methyl-D-erythritol 2,4-cyclic diphosphate + CMP. Its pathway is isoprenoid biosynthesis; isopentenyl diphosphate biosynthesis via DXP pathway; isopentenyl diphosphate from 1-deoxy-D-xylulose 5-phosphate: step 4/6. Involved in the biosynthesis of isopentenyl diphosphate (IPP) and dimethylallyl diphosphate (DMAPP), two major building blocks of isoprenoid compounds. Catalyzes the conversion of 4-diphosphocytidyl-2-C-methyl-D-erythritol 2-phosphate (CDP-ME2P) to 2-C-methyl-D-erythritol 2,4-cyclodiphosphate (ME-CPP) with a corresponding release of cytidine 5-monophosphate (CMP). The sequence is that of 2-C-methyl-D-erythritol 2,4-cyclodiphosphate synthase from Geobacillus sp. (strain WCH70).